The sequence spans 203 residues: Phospho-2-dehydro-3-deoxyheptonate aldolase (203 aa).

The segment covering 1-10 has biased composition (basic and acidic residues); it reads MIDRLVRDSR. Positions 1–28 are disordered; it reads MIDRLVRDSRGPVTERNPPHMSLSAGPA.

It belongs to the class-I DAHP synthase family.

The enzyme catalyses D-erythrose 4-phosphate + phosphoenolpyruvate + H2O = 7-phospho-2-dehydro-3-deoxy-D-arabino-heptonate + phosphate. The protein operates within metabolic intermediate biosynthesis; chorismate biosynthesis; chorismate from D-erythrose 4-phosphate and phosphoenolpyruvate: step 1/7. In terms of biological role, stereospecific condensation of phosphoenolpyruvate (PEP) and D-erythrose-4-phosphate (E4P) giving rise to 3-deoxy-D-arabino-heptulosonate-7-phosphate (DAHP). In Amycolatopsis methanolica, this protein is Phospho-2-dehydro-3-deoxyheptonate aldolase (aroA).